A 148-amino-acid chain; its full sequence is Deoxyuridine 5'-triphosphate nucleotidohydrolase (148 aa).

Substrate is bound by residues 67–69, asparagine 80, 84–86, and lysine 94; these read RSG and TID.

Belongs to the dUTPase family. Requires Mg(2+) as cofactor.

It carries out the reaction dUTP + H2O = dUMP + diphosphate + H(+). It functions in the pathway pyrimidine metabolism; dUMP biosynthesis; dUMP from dCTP (dUTP route): step 2/2. Its function is as follows. This enzyme is involved in nucleotide metabolism: it produces dUMP, the immediate precursor of thymidine nucleotides and it decreases the intracellular concentration of dUTP so that uracil cannot be incorporated into DNA. In Orientia tsutsugamushi (strain Boryong) (Rickettsia tsutsugamushi), this protein is Deoxyuridine 5'-triphosphate nucleotidohydrolase.